Reading from the N-terminus, the 150-residue chain is Large ribosomal subunit protein bL9 (150 aa).

The protein belongs to the bacterial ribosomal protein bL9 family.

In terms of biological role, binds to the 23S rRNA. This Shewanella piezotolerans (strain WP3 / JCM 13877) protein is Large ribosomal subunit protein bL9.